The primary structure comprises 286 residues: Undecaprenyl-diphosphatase (286 aa).

The next 7 helical transmembrane spans lie at 43–63 (FWKM…PIYF), 91–111 (LTII…KIIG), 118–138 (IIMG…DVMF), 150–170 (MSVG…VFPG), 189–209 (AAAL…ATCY), 236–256 (ITLA…VAWF), and 264–284 (GFVP…AWAL).

Belongs to the UppP family.

The protein localises to the cell inner membrane. It carries out the reaction di-trans,octa-cis-undecaprenyl diphosphate + H2O = di-trans,octa-cis-undecaprenyl phosphate + phosphate + H(+). In terms of biological role, catalyzes the dephosphorylation of undecaprenyl diphosphate (UPP). Confers resistance to bacitracin. The sequence is that of Undecaprenyl-diphosphatase from Koribacter versatilis (strain Ellin345).